Here is a 125-residue protein sequence, read N- to C-terminus: Small ribosomal subunit protein eS8 (125 aa).

A disordered region spans residues 1–30 (MTIFQGRATRKPSGGKLRPNHSKRRYELGR).

It belongs to the eukaryotic ribosomal protein eS8 family. As to quaternary structure, part of the 30S ribosomal subunit.

In Picrophilus torridus (strain ATCC 700027 / DSM 9790 / JCM 10055 / NBRC 100828 / KAW 2/3), this protein is Small ribosomal subunit protein eS8.